A 181-amino-acid polypeptide reads, in one-letter code: Small ribosomal subunit protein uS4 (181 aa).

One can recognise an S4 RNA-binding domain in the interval 108–180 (RRLQTIVYRK…GERQRIMNQR (73 aa)).

Belongs to the universal ribosomal protein uS4 family. In terms of assembly, part of the 30S ribosomal subunit. Contacts protein S5. The interaction surface between S4 and S5 is involved in control of translational fidelity.

Functionally, one of the primary rRNA binding proteins, it binds directly to 16S rRNA where it nucleates assembly of the body of the 30S subunit. In terms of biological role, with S5 and S12 plays an important role in translational accuracy. This chain is Small ribosomal subunit protein uS4, found in Methanocorpusculum labreanum (strain ATCC 43576 / DSM 4855 / Z).